A 247-amino-acid chain; its full sequence is Flagellin B1 (247 aa).

A propeptide spanning residues 1 to 20 (MNKLLRKVRKAFSLKADNKA) is cleaved from the precursor.

This sequence belongs to the archaeal flagellin family. In terms of processing, glycosylated.

The protein localises to the archaeal flagellum. In terms of biological role, flagellin is the subunit protein which polymerizes to form the filaments of archaeal flagella. This Thermoplasma volcanium (strain ATCC 51530 / DSM 4299 / JCM 9571 / NBRC 15438 / GSS1) protein is Flagellin B1.